The sequence spans 574 residues: Putative diflavin flavoprotein A 3 (574 aa).

Residues 43 to 236 form a zinc metallo-hydrolase region; that stretch reads QNGTTYNSFL…PSVKMIATGH (194 aa). Fe cation contacts are provided by H92, E94, D96, H159, D178, and H236. In terms of domain architecture, Flavodoxin-like spans 265 to 409; the sequence is IGVFYVSEYG…DLGQWVTRDR (145 aa). Positions 410–574 are flavodoxin-reductase-like; sequence SIKAMKSLGA…VHHRKVGNHY (165 aa).

The protein in the N-terminal section; belongs to the zinc metallo-hydrolase group 3 family. It in the C-terminal section; belongs to the flavodoxin reductase family. Requires Fe cation as cofactor.

Functionally, mediates electron transfer from NADH to oxygen, reducing it to water. This modular protein has 3 redox cofactors, in other organisms the same activity requires 2 or 3 proteins. The protein is Putative diflavin flavoprotein A 3 (dfa3) of Nostoc sp. (strain PCC 7120 / SAG 25.82 / UTEX 2576).